Here is a 186-residue protein sequence, read N- to C-terminus: MSEPASISSGIAARYAAAVFELAKDEGALPALEKDMDALGAAWAESADLRDLATSPVYAREDQQKAIAAIAAKMGLSSLTSNTLALMGSKRRLFVLPQMVADVQNRIATEKGEITAEVTAAAPLSPEQAARLAATLKARAGKDVKLKTTVDESLIGGLVVKLGSSMIDTSVKARLAALQNAMKEVG.

The protein belongs to the ATPase delta chain family. As to quaternary structure, F-type ATPases have 2 components, F(1) - the catalytic core - and F(0) - the membrane proton channel. F(1) has five subunits: alpha(3), beta(3), gamma(1), delta(1), epsilon(1). CF(0) has four main subunits: a(1), b(1), b'(1) and c(10-14). The alpha and beta chains form an alternating ring which encloses part of the gamma chain. F(1) is attached to F(0) by a central stalk formed by the gamma and epsilon chains, while a peripheral stalk is formed by the delta, b and b' chains.

It localises to the cell inner membrane. Functionally, f(1)F(0) ATP synthase produces ATP from ADP in the presence of a proton or sodium gradient. F-type ATPases consist of two structural domains, F(1) containing the extramembraneous catalytic core and F(0) containing the membrane proton channel, linked together by a central stalk and a peripheral stalk. During catalysis, ATP synthesis in the catalytic domain of F(1) is coupled via a rotary mechanism of the central stalk subunits to proton translocation. In terms of biological role, this protein is part of the stalk that links CF(0) to CF(1). It either transmits conformational changes from CF(0) to CF(1) or is implicated in proton conduction. This Cereibacter sphaeroides (strain ATCC 17025 / ATH 2.4.3) (Rhodobacter sphaeroides) protein is ATP synthase subunit delta.